The sequence spans 796 residues: Protein tyrosine phosphatase domain-containing protein 1 (796 aa).

Positions 126-297 (YSSWVTDNIL…LIPLRNIFSC (172 aa)) constitute a Tyrosine-protein phosphatase domain. Cys-234 serves as the catalytic Phosphocysteine intermediate. A phosphoserine mark is found at Ser-435 and Ser-437.

The protein belongs to the protein-tyrosine phosphatase family. Non-receptor class PTPDC1 subfamily.

May play roles in cilia formation and/or maintenance. The protein is Protein tyrosine phosphatase domain-containing protein 1 (PTPDC1) of Bos taurus (Bovine).